We begin with the raw amino-acid sequence, 436 residues long: MRQALPLVTRQGDRIAIVSGLRTPFARQATAFHGIPAVDLGKMVVGELLARSEIPADAIEQLVFGQVVQMPEAPNIAREIVLGTGMNVHTDAYSVSRACATSFQAVANVAESLMAGTIRAGIAGGADSSSVLPIGVSKALARVLVDGNKARTTRQRLTLFSRLRLRDLLPVPPAVAEYSTGLRMGDTAEQMAKTYGITREQQDALAHRSHQRAAQAWAEGKLAEEVMTTYVPPYKNPFAEDNNIRGASTLADYAKLRPAFDRKHGSVTAANSTPLTDGAAAVIMMTESRAKELGLRPLGYLRSYAFTAIDVWQDMLLGPAWSTPLALERAGLTMADLTLFDMHEAFAAQTLANLQLLGSERFAREVLGRAQATGEVDDAKFNVLGGSIAYGHPFAATGARMITQTLHELRRRGGGFGLVTACAAGGLGAAMVLEAE.

The active-site Acyl-thioester intermediate is cysteine 99. Residues histidine 392 and cysteine 422 each act as proton acceptor in the active site.

This sequence belongs to the thiolase-like superfamily. Thiolase family. In terms of assembly, heterotetramer of two alpha chains (FadJ) and two beta chains (FadI).

It is found in the cytoplasm. The catalysed reaction is an acyl-CoA + acetyl-CoA = a 3-oxoacyl-CoA + CoA. Its pathway is lipid metabolism; fatty acid beta-oxidation. Catalyzes the final step of fatty acid oxidation in which acetyl-CoA is released and the CoA ester of a fatty acid two carbons shorter is formed. The chain is 3-ketoacyl-CoA thiolase from Salmonella paratyphi B (strain ATCC BAA-1250 / SPB7).